We begin with the raw amino-acid sequence, 257 residues long: Phosphate import ATP-binding protein PstB (257 aa).

The 242-residue stretch at 11-252 folds into the ABC transporter domain; it reads IQVRDLNFYY…PAKKQTEDYI (242 aa). 43-50 provides a ligand contact to ATP; the sequence is GPSGCGKS.

It belongs to the ABC transporter superfamily. Phosphate importer (TC 3.A.1.7) family. As to quaternary structure, the complex is composed of two ATP-binding proteins (PstB), two transmembrane proteins (PstC and PstA) and a solute-binding protein (PstS).

It is found in the cell inner membrane. The enzyme catalyses phosphate(out) + ATP + H2O = ADP + 2 phosphate(in) + H(+). Its function is as follows. Part of the ABC transporter complex PstSACB involved in phosphate import. Responsible for energy coupling to the transport system. The sequence is that of Phosphate import ATP-binding protein PstB from Enterobacter cloacae.